A 351-amino-acid polypeptide reads, in one-letter code: tRNA N6-adenosine threonylcarbamoyltransferase (351 aa).

H124 and H128 together coordinate Fe cation. Substrate contacts are provided by residues 146 to 150 (LVSGG), D180, G193, D197, and N285. Residue D313 participates in Fe cation binding.

It belongs to the KAE1 / TsaD family. The cofactor is Fe(2+).

It localises to the cytoplasm. It catalyses the reaction L-threonylcarbamoyladenylate + adenosine(37) in tRNA = N(6)-L-threonylcarbamoyladenosine(37) in tRNA + AMP + H(+). Functionally, required for the formation of a threonylcarbamoyl group on adenosine at position 37 (t(6)A37) in tRNAs that read codons beginning with adenine. Is involved in the transfer of the threonylcarbamoyl moiety of threonylcarbamoyl-AMP (TC-AMP) to the N6 group of A37, together with TsaE and TsaB. TsaD likely plays a direct catalytic role in this reaction. In Mycobacterium leprae (strain TN), this protein is tRNA N6-adenosine threonylcarbamoyltransferase.